A 212-amino-acid polypeptide reads, in one-letter code: Adenylate kinase (212 aa).

Residue 10 to 15 (GAGKGT) coordinates ATP. Positions 30 to 59 (STGDMFRAAMANQTEMGVLAKSYIDKGELV) are NMP. AMP-binding positions include threonine 31, arginine 36, 57 to 59 (ELV), 86 to 89 (GYPR), and glutamine 93. The interval 127–159 (GRIIHRVTGETFHKVFNPPVDYKEEDYYQREDD) is LID. ATP-binding positions include arginine 128 and 137-138 (TF). Arginine 156 and arginine 167 together coordinate AMP. Glutamine 195 contributes to the ATP binding site.

This sequence belongs to the adenylate kinase family. Monomer.

The protein resides in the cytoplasm. The catalysed reaction is AMP + ATP = 2 ADP. It participates in purine metabolism; AMP biosynthesis via salvage pathway; AMP from ADP: step 1/1. In terms of biological role, catalyzes the reversible transfer of the terminal phosphate group between ATP and AMP. Plays an important role in cellular energy homeostasis and in adenine nucleotide metabolism. The protein is Adenylate kinase of Streptococcus pneumoniae serotype 4 (strain ATCC BAA-334 / TIGR4).